The primary structure comprises 163 residues: 2-C-methyl-D-erythritol 2,4-cyclodiphosphate synthase (163 aa).

2 residues coordinate a divalent metal cation: Asp-15 and His-17. 4-CDP-2-C-methyl-D-erythritol 2-phosphate is bound by residues 15–17 (DFH) and 41–42 (HS). Residue His-49 coordinates a divalent metal cation. 4-CDP-2-C-methyl-D-erythritol 2-phosphate-binding positions include 63-65 (DIG) and 139-142 (TTNE).

This sequence belongs to the IspF family. As to quaternary structure, homotrimer. Requires a divalent metal cation as cofactor.

The catalysed reaction is 4-CDP-2-C-methyl-D-erythritol 2-phosphate = 2-C-methyl-D-erythritol 2,4-cyclic diphosphate + CMP. It functions in the pathway isoprenoid biosynthesis; isopentenyl diphosphate biosynthesis via DXP pathway; isopentenyl diphosphate from 1-deoxy-D-xylulose 5-phosphate: step 4/6. Involved in the biosynthesis of isopentenyl diphosphate (IPP) and dimethylallyl diphosphate (DMAPP), two major building blocks of isoprenoid compounds. Catalyzes the conversion of 4-diphosphocytidyl-2-C-methyl-D-erythritol 2-phosphate (CDP-ME2P) to 2-C-methyl-D-erythritol 2,4-cyclodiphosphate (ME-CPP) with a corresponding release of cytidine 5-monophosphate (CMP). The sequence is that of 2-C-methyl-D-erythritol 2,4-cyclodiphosphate synthase from Gloeobacter violaceus (strain ATCC 29082 / PCC 7421).